Here is a 93-residue protein sequence, read N- to C-terminus: MNNTNLILENARDWHVVGLIVQGNPKKLSAIQTALLAIEHTEIPTLDEKLGKFVVVMQSNDQHLLLEKMESVKDIDGVINVSLVYHEQDEQNK.

The protein belongs to the NapD family. As to quaternary structure, interacts with the cytoplasmic NapA precursor.

The protein resides in the cytoplasm. Functionally, chaperone for NapA, the catalytic subunit of the periplasmic nitrate reductase. It binds directly and specifically to the twin-arginine signal peptide of NapA, preventing premature interaction with the Tat translocase and premature export. This Haemophilus influenzae (strain ATCC 51907 / DSM 11121 / KW20 / Rd) protein is Chaperone NapD.